Reading from the N-terminus, the 307-residue chain is GTPase Era (307 aa).

Residues 17 to 186 (RCGFVAIVGR…LELIKPYLPE (170 aa)) enclose the Era-type G domain. The segment at 25-32 (GRPNVGKS) is G1. GTP is bound at residue 25 to 32 (GRPNVGKS). Positions 51 to 55 (QTTRN) are G2. The tract at residues 72–75 (DTPG) is G3. Residues 72–76 (DTPGF) and 133–136 (NKID) contribute to the GTP site. Residues 133–136 (NKID) are G4. A G5 region spans residues 165 to 167 (VSA). One can recognise a KH type-2 domain in the interval 217 to 293 (LGEELPYAMN…FLKVWVKVKS (77 aa)).

It belongs to the TRAFAC class TrmE-Era-EngA-EngB-Septin-like GTPase superfamily. Era GTPase family. As to quaternary structure, monomer.

The protein resides in the cytoplasm. It localises to the cell inner membrane. An essential GTPase that binds both GDP and GTP, with rapid nucleotide exchange. Plays a role in 16S rRNA processing and 30S ribosomal subunit biogenesis and possibly also in cell cycle regulation and energy metabolism. This chain is GTPase Era, found in Neisseria meningitidis serogroup A / serotype 4A (strain DSM 15465 / Z2491).